Here is a 250-residue protein sequence, read N- to C-terminus: tRNA (guanine-N(7)-)-methyltransferase (250 aa).

Positions 1–10 (MTPDDPRDAS) are enriched in basic and acidic residues. Residues 1–30 (MTPDDPRDASDASLADATADSASRGHGSFF) form a disordered region. A compositionally biased stretch (low complexity) spans 11–24 (DASLADATADSASR). S-adenosyl-L-methionine-binding residues include Glu-79, Glu-104, Asp-131, and Asp-153. The active site involves Asp-153. Substrate-binding residues include Lys-157 and Asp-189.

The protein belongs to the class I-like SAM-binding methyltransferase superfamily. TrmB family.

It carries out the reaction guanosine(46) in tRNA + S-adenosyl-L-methionine = N(7)-methylguanosine(46) in tRNA + S-adenosyl-L-homocysteine. It participates in tRNA modification; N(7)-methylguanine-tRNA biosynthesis. Catalyzes the formation of N(7)-methylguanine at position 46 (m7G46) in tRNA. The protein is tRNA (guanine-N(7)-)-methyltransferase of Rhodopseudomonas palustris (strain BisA53).